A 133-amino-acid polypeptide reads, in one-letter code: Small ribosomal subunit protein uS11 (133 aa).

Residues 1–23 (MPPKTRGAVRKPRKKDKKNIALG) form a disordered region. A compositionally biased stretch (basic residues) spans 7 to 17 (GAVRKPRKKDK).

This sequence belongs to the universal ribosomal protein uS11 family. As to quaternary structure, part of the 30S ribosomal subunit. Interacts with proteins S7 and S18. Binds to IF-3.

Located on the platform of the 30S subunit, it bridges several disparate RNA helices of the 16S rRNA. Forms part of the Shine-Dalgarno cleft in the 70S ribosome. The sequence is that of Small ribosomal subunit protein uS11 from Arthrobacter sp. (strain FB24).